The chain runs to 174 residues: Major allergen Can f 1 (174 aa).

The signal sequence occupies residues 1–18 (MKTLLLTIGFSLIAILQA). An intrachain disulfide couples C78 to C169. The N-linked (GlcNAc...) asparagine glycan is linked to N80.

Belongs to the calycin superfamily. Lipocalin family. As to expression, tongue epithelial tissue.

The protein localises to the secreted. The sequence is that of Major allergen Can f 1 from Canis lupus familiaris (Dog).